Here is a 539-residue protein sequence, read N- to C-terminus: Acid-sensing ion channel 4 (539 aa).

Topologically, residues 1-68 are cytoplasmic; sequence MPIEIVCKIK…GPGPHGLRRT (68 aa). Residues 69–89 form a helical membrane-spanning segment; it reads LWALALLTSLAAFLYQAASLA. Residues 90-438 are Extracellular-facing; sequence RGYLTRPHLV…EQQAAYGLSA (349 aa). Disulfide bonds link Cys-118–Cys-202 and Cys-180–Cys-187. Asn-191, Asn-243, Asn-341, and Asn-376 each carry an N-linked (GlcNAc...) asparagine glycan. Disulfide bonds link Cys-296–Cys-375, Cys-318–Cys-371, Cys-322–Cys-369, Cys-331–Cys-353, and Cys-333–Cys-345. A helical transmembrane segment spans residues 439 to 459; sequence LLGDLGGQMGLFIGASILTLL. The GAS motif; ion selectivity filter signature appears at 452 to 454; that stretch reads GAS. Topologically, residues 460 to 539 are cytoplasmic; that stretch reads EILDYIYEVS…PGSLFEDFAC (80 aa). Positions 500–531 are disordered; the sequence is KEQSPCPSRGRAEGGGASSLLPNHHHPHGPPG.

The protein belongs to the amiloride-sensitive sodium channel (TC 1.A.6) family. ASIC4 subfamily. Homotrimer. Heterotrimer; with other ASIC proteins producing functional channels.

The protein resides in the cell membrane. Functionally, does not exhibit measurable stand-alone pH-gated sodium channel activity but may form pH-gated heterotrimeric sodium channels. Its activity could also depend on alternative gating mechanisms. The polypeptide is Acid-sensing ion channel 4 (Mus musculus (Mouse)).